A 156-amino-acid polypeptide reads, in one-letter code: SPbeta prophage-derived uncharacterized protein YosH (156 aa).

The protein is SPbeta prophage-derived uncharacterized protein YosH (yosH) of Bacillus subtilis (strain 168).